Here is a 146-residue protein sequence, read N- to C-terminus: Leghemoglobin-3 (146 aa).

The Globin domain maps to 2–146 (GFTDKQEALV…LATAIKKAMV (145 aa)). Residue Y29 is modified to Nitrated tyrosine. S44 provides a ligand contact to heme b. S44 bears the Phosphoserine mark. Position 61 (H61) interacts with O2. Heme b is bound by residues K64, H93, and K96. Y134 bears the Nitrated tyrosine mark.

This sequence belongs to the plant globin family. Monomer. Post-translationally, nitrated in effective nodules and particularly in hypoxic conditions; this mechanism may play a protective role in the symbiosis by buffering toxic peroxynitrite NO(2)(-). Nitration level decrease during nodule senescence. Phosphorylation at Ser-44 disrupts the molecular environment of its porphyrin ring oxygen binding pocket, thus leading to a reduced oxygen consumption and to the delivery of oxygen O(2) to symbiosomes. As to expression, root nodules.

Its subcellular location is the cytoplasm. The protein resides in the cytosol. The protein localises to the nucleus. In terms of biological role, leghemoglobin that reversibly binds oxygen O(2) through a pentacoordinated heme iron. In root nodules, facilitates the diffusion of oxygen to the bacteroids while preventing the bacterial nitrogenase from being inactivated by buffering dioxygen, nitric oxide and carbon monoxide, and promoting the formation of reactive oxygen species (ROS, e.g. H(2)O(2)). This role is essential for symbiotic nitrogen fixation (SNF). The protein is Leghemoglobin-3 of Medicago sativa (Alfalfa).